Here is a 76-residue protein sequence, read N- to C-terminus: Conotoxin Cal29b (76 aa).

Positions 1 to 43 (MKLTCVLIVAVLILAACQFTAANMARYGKTQIARSDVKSIDAR) are cleaved as a signal peptide.

It belongs to the conotoxin O1 superfamily. Post-translationally, may contain 4 disulfide bonds. Expressed by the venom duct.

It localises to the secreted. In terms of biological role, is able to inhibit the growth of Mycobacterium tuberculosis (MIC=0.22-3.52 uM against strain H37Rv and 2 multidrug-resistant strains). May also show neurotoxic activity. This Californiconus californicus (California cone) protein is Conotoxin Cal29b.